A 599-amino-acid chain; its full sequence is Cartilage intermediate layer protein 1 (599 aa).

Residues Asn47, Asn416, and Asn472 are each glycosylated (N-linked (GlcNAc...) asparagine). Residues 550–560 (QSTSARPSPAS) show a composition bias toward polar residues. Positions 550–599 (QSTSARPSPASTVRGRAPSRRQRASSGSQRQPRGVASLRFPGVAQQPLSN) are disordered. Residues 573–583 (ASSGSQRQPRG) show a composition bias toward low complexity.

In terms of assembly, monomer. Interacts with TGFB1. Cleaved into 2 chains possibly by a furin-like protease upon or preceding secretion. In terms of tissue distribution, specifically expressed in cartilage. Expressed at lower level in young cartilage than in adult cartilage. In adult cartilage, it is highly expressed throughout middeep zones.

The protein localises to the secreted. The protein resides in the extracellular space. Its subcellular location is the extracellular matrix. Probably plays a role in cartilage scaffolding. May act by antagonizing TGF-beta1 (TGFB1) and IGF1 functions. Has the ability to suppress IGF1-induced proliferation and sulfated proteoglycan synthesis, and inhibits ligand-induced IGF1R autophosphorylation. May inhibit TGFB1-mediated induction of cartilage matrix genes via its interaction with TGFB1. Overexpression may lead to impair chondrocyte growth and matrix repair and indirectly promote inorganic pyrophosphate (PPi) supersaturation in aging and osteoarthritis cartilage. This Sus scrofa (Pig) protein is Cartilage intermediate layer protein 1 (CILP).